The primary structure comprises 108 residues: uncharacterized protein (108 aa).

The interval 81–108 is disordered; the sequence is TNHHQQQQNHQNQQQQQQQPNGIFENNI. Residues 83–99 are compositionally biased toward low complexity; it reads HHQQQQNHQNQQQQQQQ.

This is an uncharacterized protein from Dictyostelium discoideum (Social amoeba).